The chain runs to 232 residues: Large ribosomal subunit protein uL1 (232 aa).

It belongs to the universal ribosomal protein uL1 family. As to quaternary structure, part of the 50S ribosomal subunit.

Binds directly to 23S rRNA. The L1 stalk is quite mobile in the ribosome, and is involved in E site tRNA release. In terms of biological role, protein L1 is also a translational repressor protein, it controls the translation of the L11 operon by binding to its mRNA. The chain is Large ribosomal subunit protein uL1 from Stenotrophomonas maltophilia (strain K279a).